Consider the following 414-residue polypeptide: Gamma-glutamyl phosphate reductase (414 aa).

It belongs to the gamma-glutamyl phosphate reductase family.

The protein localises to the cytoplasm. The enzyme catalyses L-glutamate 5-semialdehyde + phosphate + NADP(+) = L-glutamyl 5-phosphate + NADPH + H(+). It functions in the pathway amino-acid biosynthesis; L-proline biosynthesis; L-glutamate 5-semialdehyde from L-glutamate: step 2/2. In terms of biological role, catalyzes the NADPH-dependent reduction of L-glutamate 5-phosphate into L-glutamate 5-semialdehyde and phosphate. The product spontaneously undergoes cyclization to form 1-pyrroline-5-carboxylate. This chain is Gamma-glutamyl phosphate reductase, found in Limosilactobacillus reuteri (strain DSM 20016) (Lactobacillus reuteri).